Here is a 370-residue protein sequence, read N- to C-terminus: Queuine tRNA-ribosyltransferase (370 aa).

Catalysis depends on Asp-89, which acts as the Proton acceptor. Substrate-binding positions include 89–93, Asp-143, Gln-187, and Gly-214; that span reads DSGGF. The RNA binding stretch occupies residues 245-251; the sequence is GVGTPED. Asp-264 serves as the catalytic Nucleophile. An RNA binding; important for wobble base 34 recognition region spans residues 269–273; sequence TRNAR. 4 residues coordinate Zn(2+): Cys-302, Cys-304, Cys-307, and His-333.

It belongs to the queuine tRNA-ribosyltransferase family. Homodimer. Within each dimer, one monomer is responsible for RNA recognition and catalysis, while the other monomer binds to the replacement base PreQ1. The cofactor is Zn(2+).

The catalysed reaction is 7-aminomethyl-7-carbaguanine + guanosine(34) in tRNA = 7-aminomethyl-7-carbaguanosine(34) in tRNA + guanine. It participates in tRNA modification; tRNA-queuosine biosynthesis. Its function is as follows. Catalyzes the base-exchange of a guanine (G) residue with the queuine precursor 7-aminomethyl-7-deazaguanine (PreQ1) at position 34 (anticodon wobble position) in tRNAs with GU(N) anticodons (tRNA-Asp, -Asn, -His and -Tyr). Catalysis occurs through a double-displacement mechanism. The nucleophile active site attacks the C1' of nucleotide 34 to detach the guanine base from the RNA, forming a covalent enzyme-RNA intermediate. The proton acceptor active site deprotonates the incoming PreQ1, allowing a nucleophilic attack on the C1' of the ribose to form the product. After dissociation, two additional enzymatic reactions on the tRNA convert PreQ1 to queuine (Q), resulting in the hypermodified nucleoside queuosine (7-(((4,5-cis-dihydroxy-2-cyclopenten-1-yl)amino)methyl)-7-deazaguanosine). The chain is Queuine tRNA-ribosyltransferase from Aromatoleum aromaticum (strain DSM 19018 / LMG 30748 / EbN1) (Azoarcus sp. (strain EbN1)).